Consider the following 1442-residue polypeptide: Trafficking protein particle complex subunit 10 (1442 aa).

Over residues Met-1–Asp-23 the composition is skewed to polar residues. 6 disordered regions span residues Met-1 to Ser-86, Thr-251 to Lys-277, Gly-535 to Ile-564, Leu-1208 to Lys-1238, Gln-1316 to Gln-1335, and Leu-1422 to Thr-1442. Residues Ser-39–Ser-86 show a composition bias toward low complexity. The span at Gly-535–Gly-553 shows a compositional bias: low complexity. The span at Lys-554–Ile-564 shows a compositional bias: polar residues. The span at Leu-1208–His-1236 shows a compositional bias: low complexity. Over residues Asn-1425 to Thr-1442 the composition is skewed to low complexity.

This sequence belongs to the TMEM1 family. Part of the multisubunit TRAPP (transport protein particle) complex.

It localises to the golgi apparatus. The protein resides in the cis-Golgi network. Its function is as follows. May play a role in vesicular transport from endoplasmic reticulum to Golgi. The polypeptide is Trafficking protein particle complex subunit 10 (trapcc10-1) (Dictyostelium discoideum (Social amoeba)).